A 240-amino-acid polypeptide reads, in one-letter code: Large ribosomal subunit protein uL2 (240 aa).

The segment at 199–240 (DHPFGGGGRQHPGRPKSVSRDAAPGRKVGDIASKRTGRGGNE) is disordered. Residues 221-231 (APGRKVGDIAS) are compositionally biased toward basic and acidic residues.

Belongs to the universal ribosomal protein uL2 family. In terms of assembly, part of the 50S ribosomal subunit. Forms a bridge to the 30S subunit in the 70S ribosome.

One of the primary rRNA binding proteins. Required for association of the 30S and 50S subunits to form the 70S ribosome, for tRNA binding and peptide bond formation. It has been suggested to have peptidyltransferase activity; this is somewhat controversial. Makes several contacts with the 16S rRNA in the 70S ribosome. In Halobacterium salinarum (strain ATCC 29341 / DSM 671 / R1), this protein is Large ribosomal subunit protein uL2.